We begin with the raw amino-acid sequence, 78 residues long: MREAKDGVLISVHVSPGSKEVSFSYDEWRRAVEVRIKSPAKEGKANRELLGIFRQIFGEVELVSGEKSRSKVLKGKRE.

Belongs to the UPF0235 family.

This Archaeoglobus fulgidus (strain ATCC 49558 / DSM 4304 / JCM 9628 / NBRC 100126 / VC-16) protein is UPF0235 protein AF_2072.